The following is a 217-amino-acid chain: Homologous-pairing protein 2 homolog (217 aa).

The stretch at 93-153 (IVALTAKVQS…LKNIKAATNH (61 aa)) forms a coiled coil. Residues 118-182 (SSALTTPEMQ…WRKRKRMATE (65 aa)) are DNA-binding.

This sequence belongs to the HOP2 family. In terms of assembly, interacts with the DNA-binding domain of the nuclear receptors NR3C1/GR, ESR2/ER-beta, THRB and RXRA. Forms a stable heterodimer with MND1. Interacts with PSMC3/TBP1. Post-translationally, PTM: Phosphorylated by PKA, PKC and MAPK. Highly expressed in testis and colon.

It is found in the nucleus. In terms of biological role, plays an important role in meiotic recombination. Stimulates DMC1-mediated strand exchange required for pairing homologous chromosomes during meiosis. The complex PSMC3IP/MND1 binds DNA, stimulates the recombinase activity of DMC1 as well as DMC1 D-loop formation from double-strand DNA. This complex stabilizes presynaptic RAD51 and DMC1 filaments formed on single strand DNA to capture double-strand DNA. This complex stimulates both synaptic and presynaptic critical steps in RAD51 and DMC1-promoted homologous pairing. May inhibit HIV-1 viral protein TAT activity and modulate the activity of proteasomes through association with PSMC3. Acts as a tissue specific coactivator of hormone-dependent transcription mediated by nuclear receptors. The polypeptide is Homologous-pairing protein 2 homolog (PSMC3IP) (Homo sapiens (Human)).